A 203-amino-acid chain; its full sequence is Small ribosomal subunit protein uS3 (203 aa).

It belongs to the universal ribosomal protein uS3 family. In terms of assembly, part of the 30S ribosomal subunit. Forms a tight complex with proteins S10 and S14.

Functionally, binds the lower part of the 30S subunit head. Binds mRNA in the 70S ribosome, positioning it for translation. This Carsonella ruddii (strain PV) protein is Small ribosomal subunit protein uS3.